We begin with the raw amino-acid sequence, 295 residues long: Ribosomal RNA small subunit methyltransferase A (295 aa).

Residues Asn-29, Leu-31, Gly-56, Glu-77, Asp-102, and Asn-128 each coordinate S-adenosyl-L-methionine.

Belongs to the class I-like SAM-binding methyltransferase superfamily. rRNA adenine N(6)-methyltransferase family. RsmA subfamily.

The protein localises to the cytoplasm. It catalyses the reaction adenosine(1518)/adenosine(1519) in 16S rRNA + 4 S-adenosyl-L-methionine = N(6)-dimethyladenosine(1518)/N(6)-dimethyladenosine(1519) in 16S rRNA + 4 S-adenosyl-L-homocysteine + 4 H(+). Its function is as follows. Specifically dimethylates two adjacent adenosines (A1518 and A1519) in the loop of a conserved hairpin near the 3'-end of 16S rRNA in the 30S particle. May play a critical role in biogenesis of 30S subunits. The chain is Ribosomal RNA small subunit methyltransferase A from Listeria monocytogenes serotype 4a (strain HCC23).